A 347-amino-acid chain; its full sequence is Spermatogenesis associated 6-like protein (347 aa).

The disordered stretch occupies residues 115-199 (SKSHGQRVQA…ENNLEHCSKK (85 aa)). A compositionally biased stretch (polar residues) spans 116–125 (KSHGQRVQAT). Over residues 153–166 (LHLHRPTQRNHGKS) the composition is skewed to basic residues. Basic and acidic residues predominate over residues 170–183 (PGERKPPFVVRHVD). A phosphoserine mark is found at Ser218 and Ser221. The interval 234–285 (ERIVLKSQPPPPVDSSESRKPSLSHQGDASLHTETSVTTSQLSRPPSPLNQP) is disordered. A compositionally biased stretch (polar residues) spans 254-277 (PSLSHQGDASLHTETSVTTSQLSR).

This sequence belongs to the SPATA6 family.

This is Spermatogenesis associated 6-like protein (Spata6l) from Mus musculus (Mouse).